An 849-amino-acid chain; its full sequence is Membrane protein-large ribosomal subunit bL9 fusion protein (849 aa).

Positions 1–680 are unknown; sequence MFSKNKHNTK…TQLEGTNIKT (680 aa). The next 2 helical transmembrane spans lie at 11 to 31 and 64 to 84; these read FIVI…FDFQ and IIFF…IISF. A GGDEF domain is found at 214-342; sequence KTLAIAMIAF…GGDQVVVNIE (129 aa). The interval 681-849 is large ribosomal subunit protein bL9; that stretch reads VTDTLKHFLK…FLNVTERKSK (169 aa).

Belongs to the bacterial ribosomal protein bL9 family.

The protein localises to the cell membrane. Its function is as follows. Binds to the 23S rRNA. This Aster yellows witches'-broom phytoplasma (strain AYWB) protein is Membrane protein-large ribosomal subunit bL9 fusion protein.